A 130-amino-acid chain; its full sequence is uncharacterized protein (130 aa).

The tract at residues 1 to 34 (MTAVGGSPPTRRCPATEDRAPATVATPSSTDPTA) is disordered.

It to M.tuberculosis Rv1583c.

This is an uncharacterized protein from Mycobacterium tuberculosis (strain CDC 1551 / Oshkosh).